We begin with the raw amino-acid sequence, 345 residues long: S-adenosylmethionine:tRNA ribosyltransferase-isomerase (345 aa).

Belongs to the QueA family. As to quaternary structure, monomer.

Its subcellular location is the cytoplasm. The enzyme catalyses 7-aminomethyl-7-carbaguanosine(34) in tRNA + S-adenosyl-L-methionine = epoxyqueuosine(34) in tRNA + adenine + L-methionine + 2 H(+). The protein operates within tRNA modification; tRNA-queuosine biosynthesis. Transfers and isomerizes the ribose moiety from AdoMet to the 7-aminomethyl group of 7-deazaguanine (preQ1-tRNA) to give epoxyqueuosine (oQ-tRNA). In Aromatoleum aromaticum (strain DSM 19018 / LMG 30748 / EbN1) (Azoarcus sp. (strain EbN1)), this protein is S-adenosylmethionine:tRNA ribosyltransferase-isomerase.